Consider the following 241-residue polypeptide: 1-(5-phosphoribosyl)-5-[(5-phosphoribosylamino)methylideneamino] imidazole-4-carboxamide isomerase (241 aa).

The Proton acceptor role is filled by Asp8. The active-site Proton donor is Asp129.

The protein belongs to the HisA/HisF family.

The protein localises to the cytoplasm. It catalyses the reaction 1-(5-phospho-beta-D-ribosyl)-5-[(5-phospho-beta-D-ribosylamino)methylideneamino]imidazole-4-carboxamide = 5-[(5-phospho-1-deoxy-D-ribulos-1-ylimino)methylamino]-1-(5-phospho-beta-D-ribosyl)imidazole-4-carboxamide. The protein operates within amino-acid biosynthesis; L-histidine biosynthesis; L-histidine from 5-phospho-alpha-D-ribose 1-diphosphate: step 4/9. The sequence is that of 1-(5-phosphoribosyl)-5-[(5-phosphoribosylamino)methylideneamino] imidazole-4-carboxamide isomerase from Chloroflexus aurantiacus (strain ATCC 29364 / DSM 637 / Y-400-fl).